Reading from the N-terminus, the 352-residue chain is tRNA-specific 2-thiouridylase MnmA (352 aa).

ATP contacts are provided by residues 7-14 (GLSGGVDS) and Leu-33. Catalysis depends on Cys-94, which acts as the Nucleophile. Residues Cys-94 and Cys-193 are joined by a disulfide bond. Position 119 (Gly-119) interacts with ATP. The segment at 143-145 (KDQ) is interaction with tRNA. Catalysis depends on Cys-193, which acts as the Cysteine persulfide intermediate. The segment at 298–299 (RY) is interaction with tRNA.

Belongs to the MnmA/TRMU family.

Its subcellular location is the cytoplasm. It carries out the reaction S-sulfanyl-L-cysteinyl-[protein] + uridine(34) in tRNA + AH2 + ATP = 2-thiouridine(34) in tRNA + L-cysteinyl-[protein] + A + AMP + diphosphate + H(+). Its function is as follows. Catalyzes the 2-thiolation of uridine at the wobble position (U34) of tRNA, leading to the formation of s(2)U34. The protein is tRNA-specific 2-thiouridylase MnmA of Microcystis aeruginosa (strain NIES-843 / IAM M-2473).